The chain runs to 323 residues: Cytochrome c biogenesis protein CcsA (323 aa).

8 helical membrane passes run 9–29 (ILTHISFSIISIVITIHLLNL), 45–62 (MMATFFCITGLLVTRWIY), 71–91 (LYESLMFLSWSFSIIHMVPYF), 98–118 (LSAITAPSAIFTQGFATSGLL), 143–163 (MLLGYASLLCGSLLSVALLVI), 227–247 (IISLGFTFSTIGILSGAVWAN), 261–275 (TWAFITWTIFAIYLH), and 285–305 (VGPAIVASMGFLIIWICYFGV).

The protein belongs to the CcmF/CycK/Ccl1/NrfE/CcsA family. In terms of assembly, may interact with Ccs1.

It is found in the plastid. The protein resides in the chloroplast thylakoid membrane. Functionally, required during biogenesis of c-type cytochromes (cytochrome c6 and cytochrome f) at the step of heme attachment. The sequence is that of Cytochrome c biogenesis protein CcsA from Calycanthus floridus var. glaucus (Eastern sweetshrub).